Here is a 517-residue protein sequence, read N- to C-terminus: ATP synthase subunit alpha 2 (517 aa).

Residue 173 to 180 (GDRQTGKT) participates in ATP binding.

This sequence belongs to the ATPase alpha/beta chains family. In terms of assembly, F-type ATPases have 2 components, CF(1) - the catalytic core - and CF(0) - the membrane proton channel. CF(1) has five subunits: alpha(3), beta(3), gamma(1), delta(1), epsilon(1). CF(0) has three main subunits: a(1), b(2) and c(9-12). The alpha and beta chains form an alternating ring which encloses part of the gamma chain. CF(1) is attached to CF(0) by a central stalk formed by the gamma and epsilon chains, while a peripheral stalk is formed by the delta and b chains.

It is found in the cell inner membrane. The catalysed reaction is ATP + H2O + 4 H(+)(in) = ADP + phosphate + 5 H(+)(out). Its function is as follows. Produces ATP from ADP in the presence of a proton gradient across the membrane. The alpha chain is a regulatory subunit. This Legionella pneumophila (strain Corby) protein is ATP synthase subunit alpha 2.